Here is a 180-residue protein sequence, read N- to C-terminus: ATP synthase subunit delta (180 aa).

It belongs to the ATPase delta chain family. In terms of assembly, F-type ATPases have 2 components, F(1) - the catalytic core - and F(0) - the membrane proton channel. F(1) has five subunits: alpha(3), beta(3), gamma(1), delta(1), epsilon(1). F(0) has three main subunits: a(1), b(2) and c(10-14). The alpha and beta chains form an alternating ring which encloses part of the gamma chain. F(1) is attached to F(0) by a central stalk formed by the gamma and epsilon chains, while a peripheral stalk is formed by the delta and b chains.

The protein localises to the cell membrane. F(1)F(0) ATP synthase produces ATP from ADP in the presence of a proton or sodium gradient. F-type ATPases consist of two structural domains, F(1) containing the extramembraneous catalytic core and F(0) containing the membrane proton channel, linked together by a central stalk and a peripheral stalk. During catalysis, ATP synthesis in the catalytic domain of F(1) is coupled via a rotary mechanism of the central stalk subunits to proton translocation. Functionally, this protein is part of the stalk that links CF(0) to CF(1). It either transmits conformational changes from CF(0) to CF(1) or is implicated in proton conduction. The chain is ATP synthase subunit delta from Ligilactobacillus salivarius (strain UCC118) (Lactobacillus salivarius).